Reading from the N-terminus, the 122-residue chain is Small ribosomal subunit protein uS13 (122 aa).

Residues 92–122 (HRKQLPVRGQRTHTNARTRKGKAKPIAGKKK) form a disordered region.

Belongs to the universal ribosomal protein uS13 family. In terms of assembly, part of the 30S ribosomal subunit. Forms a loose heterodimer with protein S19. Forms two bridges to the 50S subunit in the 70S ribosome.

In terms of biological role, located at the top of the head of the 30S subunit, it contacts several helices of the 16S rRNA. In the 70S ribosome it contacts the 23S rRNA (bridge B1a) and protein L5 of the 50S subunit (bridge B1b), connecting the 2 subunits; these bridges are implicated in subunit movement. Contacts the tRNAs in the A and P-sites. The sequence is that of Small ribosomal subunit protein uS13 from Methylobacterium radiotolerans (strain ATCC 27329 / DSM 1819 / JCM 2831 / NBRC 15690 / NCIMB 10815 / 0-1).